A 579-amino-acid polypeptide reads, in one-letter code: Arginine--tRNA ligase (579 aa).

A 'HIGH' region motif is present at residues 136-146 (ANPTGPLHIGH).

This sequence belongs to the class-I aminoacyl-tRNA synthetase family. Monomer.

It is found in the cytoplasm. It carries out the reaction tRNA(Arg) + L-arginine + ATP = L-arginyl-tRNA(Arg) + AMP + diphosphate. The sequence is that of Arginine--tRNA ligase from Anaplasma marginale (strain St. Maries).